A 248-amino-acid chain; its full sequence is DNA polymerase sliding clamp 2 (248 aa).

The protein belongs to the PCNA family. In terms of assembly, homotrimer. The subunits circularize to form a toroid; DNA passes through its center. Replication factor C (RFC) is required to load the toroid on the DNA.

Functionally, sliding clamp subunit that acts as a moving platform for DNA processing. Responsible for tethering the catalytic subunit of DNA polymerase and other proteins to DNA during high-speed replication. This chain is DNA polymerase sliding clamp 2, found in Sulfurisphaera ohwakuensis.